The chain runs to 264 residues: Thymidylate synthase (264 aa).

A dUMP-binding site is contributed by arginine 21. Histidine 51 contacts (6R)-5,10-methylene-5,6,7,8-tetrahydrofolate. 126-127 lines the dUMP pocket; the sequence is RR. The active-site Nucleophile is cysteine 146. Residues 166–169, asparagine 177, and 207–209 each bind dUMP; these read RSAD and HLY. Aspartate 169 contacts (6R)-5,10-methylene-5,6,7,8-tetrahydrofolate. Alanine 263 contributes to the (6R)-5,10-methylene-5,6,7,8-tetrahydrofolate binding site.

It belongs to the thymidylate synthase family. Bacterial-type ThyA subfamily. As to quaternary structure, homodimer.

It localises to the cytoplasm. The catalysed reaction is dUMP + (6R)-5,10-methylene-5,6,7,8-tetrahydrofolate = 7,8-dihydrofolate + dTMP. It functions in the pathway pyrimidine metabolism; dTTP biosynthesis. Catalyzes the reductive methylation of 2'-deoxyuridine-5'-monophosphate (dUMP) to 2'-deoxythymidine-5'-monophosphate (dTMP) while utilizing 5,10-methylenetetrahydrofolate (mTHF) as the methyl donor and reductant in the reaction, yielding dihydrofolate (DHF) as a by-product. This enzymatic reaction provides an intracellular de novo source of dTMP, an essential precursor for DNA biosynthesis. This chain is Thymidylate synthase, found in Legionella pneumophila subsp. pneumophila (strain Philadelphia 1 / ATCC 33152 / DSM 7513).